The following is a 352-amino-acid chain: UDP-N-acetylglucosamine--N-acetylmuramyl-(pentapeptide) pyrophosphoryl-undecaprenol N-acetylglucosamine transferase 2 (352 aa).

Residues 11 to 13 (SAG), R164, S194, and Q289 contribute to the UDP-N-acetyl-alpha-D-glucosamine site.

The protein belongs to the glycosyltransferase 28 family. MurG subfamily.

It is found in the cell membrane. It catalyses the reaction di-trans,octa-cis-undecaprenyl diphospho-N-acetyl-alpha-D-muramoyl-L-alanyl-D-glutamyl-meso-2,6-diaminopimeloyl-D-alanyl-D-alanine + UDP-N-acetyl-alpha-D-glucosamine = di-trans,octa-cis-undecaprenyl diphospho-[N-acetyl-alpha-D-glucosaminyl-(1-&gt;4)]-N-acetyl-alpha-D-muramoyl-L-alanyl-D-glutamyl-meso-2,6-diaminopimeloyl-D-alanyl-D-alanine + UDP + H(+). It functions in the pathway cell wall biogenesis; peptidoglycan biosynthesis. Functionally, cell wall formation. Catalyzes the transfer of a GlcNAc subunit on undecaprenyl-pyrophosphoryl-MurNAc-pentapeptide (lipid intermediate I) to form undecaprenyl-pyrophosphoryl-MurNAc-(pentapeptide)GlcNAc (lipid intermediate II). This Bacillus anthracis protein is UDP-N-acetylglucosamine--N-acetylmuramyl-(pentapeptide) pyrophosphoryl-undecaprenol N-acetylglucosamine transferase 2.